A 444-amino-acid chain; its full sequence is Exodeoxyribonuclease 7 large subunit (444 aa).

This sequence belongs to the XseA family. In terms of assembly, heterooligomer composed of large and small subunits.

The protein resides in the cytoplasm. The enzyme catalyses Exonucleolytic cleavage in either 5'- to 3'- or 3'- to 5'-direction to yield nucleoside 5'-phosphates.. In terms of biological role, bidirectionally degrades single-stranded DNA into large acid-insoluble oligonucleotides, which are then degraded further into small acid-soluble oligonucleotides. This Pseudoalteromonas atlantica (strain T6c / ATCC BAA-1087) protein is Exodeoxyribonuclease 7 large subunit.